A 1224-amino-acid chain; its full sequence is Serine/threonine-protein kinase CST20 (1224 aa).

A compositionally biased stretch (polar residues) spans 1 to 18 (MSILSENNPTPTSITDPN). 2 disordered regions span residues 1–378 (MSIL…TAHN) and 403–464 (TNSS…HSQE). Low complexity-rich tracts occupy residues 57-70 (NTTSANTSSLSLGS) and 95-119 (DSGSGDIDDSQQSHNNNNNESNPES). Basic and acidic residues predominate over residues 144–155 (HQGDDSDNEKQY). 3 stretches are compositionally biased toward polar residues: residues 169–191 (DSYSLGTLESPGTLNALETNNVS), 201–218 (TSSLEDLSLSLQHQNENA), and 231–240 (PTSKTSSFHD). The segment covering 242–251 (SSVISSSTSV) has biased composition (low complexity). 2 stretches are compositionally biased toward polar residues: residues 256-271 (SNPTSTRGSHLSSYKS) and 305-324 (DTLSSATNSPNLLRNDTLQG). Composition is skewed to low complexity over residues 343 to 375 (NTSATSRNTSGTSTSTVVKNSRSGTSKSTSTST) and 433 to 462 (KVRGVFSSMFGKNKSTSSSSSSNSGSNSHS). Residues 469–482 (ISTPFNAKHLAHVG) enclose the CRIB domain. 2 disordered regions span residues 539-825 (FHFD…ALAD) and 861-913 (LREK…KQAA). Residues 544-555 (NKSSSSGWSNEN) are compositionally biased toward polar residues. Gly residues predominate over residues 564-575 (SNSGSGSGGGGA). The span at 598–607 (ITPSQSMPTK) shows a compositional bias: polar residues. Over residues 608–622 (TESKQSENQHPHEDN) the composition is skewed to basic and acidic residues. Positions 623-636 (ATQYTPRTPTSHVQ) are enriched in polar residues. 3 stretches are compositionally biased toward low complexity: residues 664 to 677 (PSSQSLPRSDSQSD), 690 to 704 (SPSKIKIRSISSKSL), and 730 to 743 (SIPKSKSHSASLSS). Over residues 744-755 (QLRPATNGSTTA) the composition is skewed to polar residues. The span at 783–801 (APPPPPSAPPAPPVPPAPP) shows a compositional bias: pro residues. Residues 805-820 (LSEQTSEIPQQRTAPS) are compositionally biased toward polar residues. Positions 861-870 (LREKNERQNR) are enriched in basic and acidic residues. The span at 871 to 886 (QQETGQNNADTASGGS) shows a compositional bias: polar residues. Residues 947–1199 (YVDLVKIGQG…ADELLHDNFI (253 aa)) enclose the Protein kinase domain. Residues 953–961 (IGQGASGGV) and Lys-977 each bind ATP. Asp-1067 (proton acceptor) is an active-site residue.

The protein belongs to the protein kinase superfamily. STE Ser/Thr protein kinase family. STE20 subfamily.

The protein localises to the cytoplasm. The protein resides in the nucleus. It carries out the reaction L-seryl-[protein] + ATP = O-phospho-L-seryl-[protein] + ADP + H(+). It catalyses the reaction L-threonyl-[protein] + ATP = O-phospho-L-threonyl-[protein] + ADP + H(+). Its function is as follows. MAP4K component of the MAPK pathway required for the mating pheromone response, and the regulation of cell polarity and cell cycle. Phosphorylates histone H2B to form H2BS10ph. Required for hyphal formation and virulence. The chain is Serine/threonine-protein kinase CST20 (CST20) from Candida albicans (strain WO-1) (Yeast).